Reading from the N-terminus, the 382-residue chain is Queuine tRNA-ribosyltransferase (382 aa).

The active-site Proton acceptor is the Asp96. Substrate-binding positions include 96-100 (DSGGF), Asp151, Gln194, and Gly221. The interval 252 to 258 (GVGAPDS) is RNA binding. The active-site Nucleophile is the Asp271. The segment at 276-280 (TRIAR) is RNA binding; important for wobble base 34 recognition. Zn(2+) is bound by residues Cys309, Cys311, Cys314, and His340.

Belongs to the queuine tRNA-ribosyltransferase family. As to quaternary structure, homodimer. Within each dimer, one monomer is responsible for RNA recognition and catalysis, while the other monomer binds to the replacement base PreQ1. Requires Zn(2+) as cofactor.

The enzyme catalyses 7-aminomethyl-7-carbaguanine + guanosine(34) in tRNA = 7-aminomethyl-7-carbaguanosine(34) in tRNA + guanine. Its pathway is tRNA modification; tRNA-queuosine biosynthesis. In terms of biological role, catalyzes the base-exchange of a guanine (G) residue with the queuine precursor 7-aminomethyl-7-deazaguanine (PreQ1) at position 34 (anticodon wobble position) in tRNAs with GU(N) anticodons (tRNA-Asp, -Asn, -His and -Tyr). Catalysis occurs through a double-displacement mechanism. The nucleophile active site attacks the C1' of nucleotide 34 to detach the guanine base from the RNA, forming a covalent enzyme-RNA intermediate. The proton acceptor active site deprotonates the incoming PreQ1, allowing a nucleophilic attack on the C1' of the ribose to form the product. After dissociation, two additional enzymatic reactions on the tRNA convert PreQ1 to queuine (Q), resulting in the hypermodified nucleoside queuosine (7-(((4,5-cis-dihydroxy-2-cyclopenten-1-yl)amino)methyl)-7-deazaguanosine). The polypeptide is Queuine tRNA-ribosyltransferase (Lactococcus lactis subsp. cremoris (strain MG1363)).